The primary structure comprises 179 residues: Large ribosomal subunit protein uL16m (179 aa).

The protein belongs to the universal ribosomal protein uL16 family. Component of the mitochondrial ribosome large subunit.

The protein localises to the mitochondrion. This Arabidopsis thaliana (Mouse-ear cress) protein is Large ribosomal subunit protein uL16m (RPL16).